The primary structure comprises 136 residues: Histone H2B.5 (136 aa).

The segment covering 1–36 (MAPKAEKKPAAEKKPVETEKKPKAEKRVPGKDGGAD) has biased composition (basic and acidic residues). Residues 1 to 44 (MAPKAEKKPAAEKKPVETEKKPKAEKRVPGKDGGADKKKKKAKK) form a disordered region. N6-acetyllysine occurs at positions 7 and 26. Residue lysine 132 forms a Glycyl lysine isopeptide (Lys-Gly) (interchain with G-Cter in ubiquitin) linkage.

It belongs to the histone H2B family. As to quaternary structure, the nucleosome is a histone octamer containing two molecules each of H2A, H2B, H3 and H4 assembled in one H3-H4 heterotetramer and two H2A-H2B heterodimers. The octamer wraps approximately 147 bp of DNA. Post-translationally, can be acetylated to form H2BK6ac and H2BK33ac. In terms of processing, monoubiquitinated to form H2BK143ub1; may give a specific tag for epigenetic transcriptional activation.

It localises to the nucleus. The protein localises to the chromosome. In terms of biological role, core component of nucleosome. Nucleosomes wrap and compact DNA into chromatin, limiting DNA accessibility to the cellular machineries which require DNA as a template. Histones thereby play a central role in transcription regulation, DNA repair, DNA replication and chromosomal stability. DNA accessibility is regulated via a complex set of post-translational modifications of histones, also called histone code, and nucleosome remodeling. The protein is Histone H2B.5 of Triticum aestivum (Wheat).